We begin with the raw amino-acid sequence, 135 residues long: Cytochrome b-c1 complex subunit 6, mitochondrial (135 aa).

Residues 1–70 are disordered; that stretch reads MSFFRDLLES…ETADPLDTLR (70 aa). Residues 19-64 are compositionally biased toward acidic residues; sequence EPVEDVEVEQPEDAPEEEVSEETVEEEEDDDEDDDEDDEEEEETAD.

The protein belongs to the UQCRH/QCR6 family. Component of the ubiquinol-cytochrome c oxidoreductase (cytochrome b-c1 complex, complex III, CIII), a multisubunit enzyme composed of 10 subunits. The complex is composed of 3 respiratory subunits cytochrome b (COB), cytochrome c1 (CYT1) and Rieske protein (RIP1), 2 core protein subunits COR1 and QCR2, and 5 low-molecular weight protein subunits QCR6, QCR7, QCR8, QCR9 and QCR10. The complex exists as an obligatory dimer and forms supercomplexes (SCs) in the inner mitochondrial membrane with a monomer or a dimer of cytochrome c oxidase (complex IV, CIV), resulting in 2 different assemblies (supercomplexes III(2)IV and III(2)IV(2)).

Its subcellular location is the mitochondrion inner membrane. In terms of biological role, component of the ubiquinol-cytochrome c oxidoreductase, a multisubunit transmembrane complex that is part of the mitochondrial electron transport chain which drives oxidative phosphorylation. The complex plays an important role in the uptake of multiple carbon sources present in different host niches. This is Cytochrome b-c1 complex subunit 6, mitochondrial from Candida albicans (strain SC5314 / ATCC MYA-2876) (Yeast).